Reading from the N-terminus, the 186-residue chain is Probable GPI-anchored cupredoxin ARB_05732-1 (186 aa).

The N-terminal stretch at Met-1–Ala-18 is a signal peptide. A Cu cation-binding site is contributed by His-55. Cysteines 66 and 104 form a disulfide. An N-linked (GlcNAc...) asparagine glycan is attached at Asn-87. The Cu cation site is built by Cys-98 and His-103. The interval Gly-130–Ser-160 is disordered. Asn-142 carries an N-linked (GlcNAc...) asparagine glycan. Residues Gly-143–Ser-160 are compositionally biased toward low complexity. Gly-153 carries the GPI-anchor amidated glycine lipid modification. Positions Gly-154–Leu-186 are cleaved as a propeptide — removed in mature form.

It belongs to the multicopper oxidase family. Requires Cu cation as cofactor.

The protein resides in the cell membrane. It localises to the secreted. Functionally, probable electron transfer copper protein that serves as a direct electron donor. The protein is Probable GPI-anchored cupredoxin ARB_05732-1 of Arthroderma benhamiae (strain ATCC MYA-4681 / CBS 112371) (Trichophyton mentagrophytes).